The primary structure comprises 334 residues: Anthranilate phosphoribosyltransferase (334 aa).

Residues Gly81, 84-85, Thr89, 91-94, 109-117, and Ala121 contribute to the 5-phospho-alpha-D-ribose 1-diphosphate site; these read GD, NIST, and KHGNRSVSS. An anthranilate-binding site is contributed by Gly81. Ser93 serves as a coordination point for Mg(2+). An anthranilate-binding site is contributed by Asn112. Arg167 lines the anthranilate pocket. Asp225 and Glu226 together coordinate Mg(2+).

It belongs to the anthranilate phosphoribosyltransferase family. In terms of assembly, homodimer. It depends on Mg(2+) as a cofactor.

The enzyme catalyses N-(5-phospho-beta-D-ribosyl)anthranilate + diphosphate = 5-phospho-alpha-D-ribose 1-diphosphate + anthranilate. The protein operates within amino-acid biosynthesis; L-tryptophan biosynthesis; L-tryptophan from chorismate: step 2/5. Catalyzes the transfer of the phosphoribosyl group of 5-phosphorylribose-1-pyrophosphate (PRPP) to anthranilate to yield N-(5'-phosphoribosyl)-anthranilate (PRA). The polypeptide is Anthranilate phosphoribosyltransferase (Histophilus somni (strain 2336) (Haemophilus somnus)).